A 362-amino-acid polypeptide reads, in one-letter code: DNA polymerase IV (362 aa).

The region spanning 6–187 (IIHVDMDAFY…LPVSSFHGVG (182 aa)) is the UmuC domain. Mg(2+) contacts are provided by Asp-10 and Asp-105. Glu-106 is an active-site residue.

It belongs to the DNA polymerase type-Y family. Monomer. Mg(2+) is required as a cofactor.

The protein localises to the cytoplasm. It carries out the reaction DNA(n) + a 2'-deoxyribonucleoside 5'-triphosphate = DNA(n+1) + diphosphate. In terms of biological role, poorly processive, error-prone DNA polymerase involved in untargeted mutagenesis. Copies undamaged DNA at stalled replication forks, which arise in vivo from mismatched or misaligned primer ends. These misaligned primers can be extended by PolIV. Exhibits no 3'-5' exonuclease (proofreading) activity. May be involved in translesional synthesis, in conjunction with the beta clamp from PolIII. The sequence is that of DNA polymerase IV from Leptospira interrogans serogroup Icterohaemorrhagiae serovar Lai (strain 56601).